A 175-amino-acid polypeptide reads, in one-letter code: MQAASLAFHPPALHTSPSYFSSKLPHHLNYSLFSHTPPTSTLSLTQTLSRKSICQPRAVGKYVREDYLVKKLSAKEIQELIKGERNVPLIIDFYATWCGPCILMAQELEMLAVEYENNALIVKVDTDDEYEFARDMQVRGLPTLYFISPDSSKDAIRTEGLIPIQMMRDIINNDL.

The transit peptide at 1-73 (MQAASLAFHP…REDYLVKKLS (73 aa)) directs the protein to the chloroplast. The Thioredoxin domain maps to 74–175 (AKEIQELIKG…MMRDIINNDL (102 aa)). Residues C98 and C101 each act as nucleophile in the active site. A disulfide bridge connects residues C98 and C101.

It belongs to the thioredoxin family. Plant CITRX-type subfamily.

It localises to the plastid. The protein localises to the chloroplast. Probable thiol-disulfide oxidoreductase that may play a role in proper chloroplast development. This chain is Thioredoxin-like protein CITRX, chloroplastic, found in Solanum tuberosum (Potato).